The primary structure comprises 292 residues: Peroxisomal 2,4-dienoyl-CoA reductase [(3E)-enoyl-CoA-producing] (292 aa).

The residue at position 2 (Ala2) is an N-acetylalanine. NADP(+) is bound by residues 35–40 (GGGSGI), 60–64 (RSLPR), and Asp86. Position 60 (Arg60) interacts with substrate. Residues Arg88, Phe118, and 126–128 (SFN) contribute to the substrate site. Lys151 is modified (N6-acetyllysine). Residues Lys182 and 208–214 (PGPISGT) contribute to the NADP(+) site. Substrate is bound at residue Arg219. Ser287 carries the post-translational modification Phosphoserine. Residues 290–292 (AKL) carry the Microbody targeting signal motif. Lys291 carries the post-translational modification N6-acetyllysine.

It belongs to the short-chain dehydrogenases/reductases (SDR) family. 2,4-dienoyl-CoA reductase subfamily. As to quaternary structure, monomer, dimer and oligomer.

It is found in the peroxisome. It catalyses the reaction a (2E,4Z)-dienoyl-CoA + NADPH + H(+) = a 4,5-saturated-(3E)-enoyl-CoA + NADP(+). It carries out the reaction a (2E,4E)-dienoyl-CoA + NADPH + H(+) = a 4,5-saturated-(3E)-enoyl-CoA + NADP(+). The catalysed reaction is (2E,4E)-hexadienoyl-CoA + NADPH + H(+) = (3E)-hexenoyl-CoA + NADP(+). The enzyme catalyses (2E,4E)-decadienoyl-CoA + NADPH + H(+) = (3E)-decenoyl-CoA + NADP(+). It catalyses the reaction (2E,4Z,7Z,10Z,13Z,16Z,19Z)-docosaheptaenoyl-CoA + NADPH + H(+) = (3E,7Z,10Z,13Z,16Z,19Z)-docosahexaenoyl-CoA + NADP(+). In terms of biological role, auxiliary enzyme of beta-oxidation. Participates in the degradation of unsaturated fatty enoyl-CoA esters having double bonds in both even- and odd-numbered positions in peroxisome. Catalyzes the NADP-dependent reduction of 2,4-dienoyl-CoA to yield trans-3-enoyl-CoA. Has activity towards short and medium chain 2,4-dienoyl-CoAs, but also towards 2,4,7,10,13,16,19-docosaheptaenoyl-CoA, suggesting that it does not constitute a rate limiting step in the peroxisomal degradation of docosahexaenoic acid. The protein is Peroxisomal 2,4-dienoyl-CoA reductase [(3E)-enoyl-CoA-producing] (DECR2) of Pongo abelii (Sumatran orangutan).